The primary structure comprises 232 residues: Beta-casein (232 aa).

Residues 1 to 15 (MKLLILACFVALALA) form the signal peptide. The N-linked (GlcNAc...) asparagine glycan is linked to Asn-22. At Ser-24 the chain carries Phosphoserine. Residue Thr-27 is modified to Phosphothreonine. Phosphoserine occurs at positions 30, 32, 33, and 34. The span at 48 to 63 (KLKREEQQQTENERQN) shows a compositional bias: basic and acidic residues. Residues 48 to 74 (KLKREEQQQTENERQNKIHQFPQPQPL) form a disordered region.

It belongs to the beta-casein family. In terms of tissue distribution, mammary gland specific. Secreted in milk.

The protein localises to the secreted. Functionally, important role in determination of the surface properties of the casein micelles. This is Beta-casein (CSN2) from Sus scrofa (Pig).